Reading from the N-terminus, the 78-residue chain is UPF0369 protein RP167 (78 aa).

This sequence belongs to the SDHAF4 family.

The polypeptide is UPF0369 protein RP167 (Rickettsia prowazekii (strain Madrid E)).